A 201-amino-acid polypeptide reads, in one-letter code: MDKFVKLTGVAAPLPVVNIDTDMIIPKDYLKTIKRTGLGTGLFAEARYNEDGTPNPDFVLNKPAYQNAKILVAGDNFGCGSSREHAPWALLDFGIRCVISTSFADIFYNNCFKNGILPIVVSQEDLDKLMDDASRGSNAILTVDLEAQEITGPDGGSIKFEVDAFKRHCLLNGLDDIGLTLEKGGSIDNYEKATAASRPWA.

It belongs to the LeuD family. LeuD type 1 subfamily. Heterodimer of LeuC and LeuD.

It carries out the reaction (2R,3S)-3-isopropylmalate = (2S)-2-isopropylmalate. Its pathway is amino-acid biosynthesis; L-leucine biosynthesis; L-leucine from 3-methyl-2-oxobutanoate: step 2/4. Functionally, catalyzes the isomerization between 2-isopropylmalate and 3-isopropylmalate, via the formation of 2-isopropylmaleate. The chain is 3-isopropylmalate dehydratase small subunit from Rhizobium meliloti (strain 1021) (Ensifer meliloti).